Here is a 181-residue protein sequence, read N- to C-terminus: Thymidine kinase (181 aa).

13–20 (GPMFSGKS) contacts ATP. The Proton acceptor role is filled by Glu-85. A substrate-binding site is contributed by Phe-115. 2 residues coordinate Zn(2+): Cys-140 and Cys-143. Position 159–163 (159–163 (IEIIG)) interacts with substrate. Cys-172 and Cys-175 together coordinate Zn(2+).

It belongs to the thymidine kinase family.

It carries out the reaction thymidine + ATP = dTMP + ADP + H(+). This is Thymidine kinase (TK) from Yaba monkey tumor virus (strain VR587) (YMTV).